The sequence spans 533 residues: uncharacterized protein (533 aa).

The first 21 residues, Met1 to Ala21, serve as a signal peptide directing secretion. The N-palmitoyl cysteine moiety is linked to residue Cys22. The S-diacylglycerol cysteine moiety is linked to residue Cys22. Residues Leu91–Thr111 are disordered. Polar residues predominate over residues Gly97 to Thr111.

Belongs to the MG067/MG068/MG395 family.

It localises to the cell membrane. This is an uncharacterized protein from Mycoplasma pneumoniae (strain ATCC 29342 / M129 / Subtype 1) (Mycoplasmoides pneumoniae).